Consider the following 254-residue polypeptide: Ribose-5-phosphate isomerase A (254 aa).

Residues 45 to 48 (TGST), 105 to 108 (DGAD), and 118 to 121 (KGGG) each bind substrate. Glu127 serves as the catalytic Proton acceptor. Position 145 (Lys145) interacts with substrate.

Belongs to the ribose 5-phosphate isomerase family. As to quaternary structure, homodimer.

It catalyses the reaction aldehydo-D-ribose 5-phosphate = D-ribulose 5-phosphate. The protein operates within carbohydrate degradation; pentose phosphate pathway; D-ribose 5-phosphate from D-ribulose 5-phosphate (non-oxidative stage): step 1/1. In terms of biological role, catalyzes the reversible conversion of ribose-5-phosphate to ribulose 5-phosphate. This Treponema pallidum subsp. pallidum (strain SS14) protein is Ribose-5-phosphate isomerase A.